The primary structure comprises 314 residues: Thymidylate synthase (314 aa).

Residues Arg21 and 176 to 177 (RR) contribute to the dUMP site. The active-site Nucleophile is Cys196. DUMP is bound by residues 216 to 219 (RSAD), Asn227, and 257 to 259 (HLY). Residue Asp219 coordinates (6R)-5,10-methylene-5,6,7,8-tetrahydrofolate. Ser313 is a binding site for (6R)-5,10-methylene-5,6,7,8-tetrahydrofolate.

It belongs to the thymidylate synthase family. Bacterial-type ThyA subfamily. As to quaternary structure, homodimer.

The protein resides in the cytoplasm. It catalyses the reaction dUMP + (6R)-5,10-methylene-5,6,7,8-tetrahydrofolate = 7,8-dihydrofolate + dTMP. It functions in the pathway pyrimidine metabolism; dTTP biosynthesis. In terms of biological role, catalyzes the reductive methylation of 2'-deoxyuridine-5'-monophosphate (dUMP) to 2'-deoxythymidine-5'-monophosphate (dTMP) while utilizing 5,10-methylenetetrahydrofolate (mTHF) as the methyl donor and reductant in the reaction, yielding dihydrofolate (DHF) as a by-product. This enzymatic reaction provides an intracellular de novo source of dTMP, an essential precursor for DNA biosynthesis. This is Thymidylate synthase from Listeria monocytogenes serovar 1/2a (strain ATCC BAA-679 / EGD-e).